Here is a 350-residue protein sequence, read N- to C-terminus: N-acetyl-gamma-glutamyl-phosphate reductase (350 aa).

C153 is an active-site residue.

This sequence belongs to the NAGSA dehydrogenase family. Type 1 subfamily.

The protein resides in the cytoplasm. It carries out the reaction N-acetyl-L-glutamate 5-semialdehyde + phosphate + NADP(+) = N-acetyl-L-glutamyl 5-phosphate + NADPH + H(+). It participates in amino-acid biosynthesis; L-arginine biosynthesis; N(2)-acetyl-L-ornithine from L-glutamate: step 3/4. Catalyzes the NADPH-dependent reduction of N-acetyl-5-glutamyl phosphate to yield N-acetyl-L-glutamate 5-semialdehyde. The polypeptide is N-acetyl-gamma-glutamyl-phosphate reductase (Thermosynechococcus vestitus (strain NIES-2133 / IAM M-273 / BP-1)).